An 862-amino-acid polypeptide reads, in one-letter code: Protein JOKA2 (862 aa).

Residues S6 to N90 form the PB1 domain. Positions G92 to S106 are enriched in low complexity. Disordered regions lie at residues G92–P117, K194–E234, and V295–G345. Polar residues predominate over residues S325–G345. The ZZ-type; degenerate zinc finger occupies H442 to T492. Zn(2+) is bound by residues C447, C450, C471, and C474. The UBA domain occupies S811–G860. An ATG8 interacting motif (AIM) motif is present at residues G817–I824.

As to quaternary structure, interacts (via C-terminal AIM motif) with ATG8CL.

The protein resides in the vacuole. The protein localises to the cytoplasmic vesicle. Its subcellular location is the autophagosome. Its function is as follows. Autophagic substrate that functions as a host autophagy cargo receptor. Requires ATG8 protein expression to be recognized as an autophagic substrate. Activates ATG8CL-mediated selective autophagy, and contributes to defense against the fungal pathogen Phytophtora infestans. This chain is Protein JOKA2, found in Solanum tuberosum (Potato).